Reading from the N-terminus, the 336-residue chain is Methionyl-tRNA formyltransferase (336 aa).

Position 110-113 (110-113 (SLLP)) interacts with (6S)-5,6,7,8-tetrahydrofolate.

It belongs to the Fmt family.

It carries out the reaction L-methionyl-tRNA(fMet) + (6R)-10-formyltetrahydrofolate = N-formyl-L-methionyl-tRNA(fMet) + (6S)-5,6,7,8-tetrahydrofolate + H(+). In terms of biological role, attaches a formyl group to the free amino group of methionyl-tRNA(fMet). The formyl group appears to play a dual role in the initiator identity of N-formylmethionyl-tRNA by promoting its recognition by IF2 and preventing the misappropriation of this tRNA by the elongation apparatus. This is Methionyl-tRNA formyltransferase from Prochlorococcus marinus (strain NATL2A).